Here is a 464-residue protein sequence, read N- to C-terminus: Maturase K (464 aa).

The protein belongs to the intron maturase 2 family. MatK subfamily.

The protein localises to the plastid. The protein resides in the chloroplast. In terms of biological role, usually encoded in the trnK tRNA gene intron. Probably assists in splicing its own and other chloroplast group II introns. The polypeptide is Maturase K (Castanea crenata (Japanese chestnut)).